A 556-amino-acid polypeptide reads, in one-letter code: Glutamine--tRNA ligase (556 aa).

The 'HIGH' region motif lies at 34–44 (PEPNGYLHIGH). Residues 35–37 (EPN) and 41–47 (HIGHAKS) contribute to the ATP site. L-glutamine-binding residues include Asp-67 and Tyr-212. ATP-binding positions include Thr-231, 261 to 262 (RL), and 269 to 271 (MSK). The 'KMSKS' region motif lies at 268–272 (VMSKR).

It belongs to the class-I aminoacyl-tRNA synthetase family. As to quaternary structure, monomer.

The protein localises to the cytoplasm. The catalysed reaction is tRNA(Gln) + L-glutamine + ATP = L-glutaminyl-tRNA(Gln) + AMP + diphosphate. The polypeptide is Glutamine--tRNA ligase (Vibrio vulnificus (strain YJ016)).